The following is a 131-amino-acid chain: Small ribosomal subunit protein uS8 (131 aa).

The protein belongs to the universal ribosomal protein uS8 family. In terms of assembly, part of the 30S ribosomal subunit. Contacts proteins S5 and S12.

Functionally, one of the primary rRNA binding proteins, it binds directly to 16S rRNA central domain where it helps coordinate assembly of the platform of the 30S subunit. The chain is Small ribosomal subunit protein uS8 from Porphyromonas gingivalis (strain ATCC 33277 / DSM 20709 / CIP 103683 / JCM 12257 / NCTC 11834 / 2561).